A 140-amino-acid chain; its full sequence is Ribosome maturation factor RimP (140 aa).

Belongs to the RimP family.

Its subcellular location is the cytoplasm. Its function is as follows. Required for maturation of 30S ribosomal subunits. The polypeptide is Ribosome maturation factor RimP (Campylobacter jejuni subsp. jejuni serotype O:2 (strain ATCC 700819 / NCTC 11168)).